The following is a 2313-amino-acid chain: Protein Ycf2 (2313 aa).

Residue 1606-1613 (GSMETGRS) participates in ATP binding.

It belongs to the Ycf2 family.

It is found in the plastid. It localises to the chloroplast stroma. Its function is as follows. Probable ATPase of unknown function. Its presence in a non-photosynthetic plant (Epifagus virginiana) and experiments in tobacco indicate that it has an essential function which is probably not related to photosynthesis. This chain is Protein Ycf2, found in Psilotum nudum (Whisk fern).